Consider the following 188-residue polypeptide: Large ribosomal subunit protein eL18z (188 aa).

This sequence belongs to the eukaryotic ribosomal protein eL18 family.

In Arabidopsis thaliana (Mouse-ear cress), this protein is Large ribosomal subunit protein eL18z (RPL18A).